The sequence spans 145 residues: 3-hydroxyacyl-[acyl-carrier-protein] dehydratase FabZ (145 aa).

His51 is an active-site residue.

Belongs to the thioester dehydratase family. FabZ subfamily.

The protein localises to the cytoplasm. The catalysed reaction is a (3R)-hydroxyacyl-[ACP] = a (2E)-enoyl-[ACP] + H2O. Functionally, involved in unsaturated fatty acids biosynthesis. Catalyzes the dehydration of short chain beta-hydroxyacyl-ACPs and long chain saturated and unsaturated beta-hydroxyacyl-ACPs. The polypeptide is 3-hydroxyacyl-[acyl-carrier-protein] dehydratase FabZ (Staphylococcus haemolyticus (strain JCSC1435)).